We begin with the raw amino-acid sequence, 340 residues long: 4-dimethylallyltryptophan N-methyltransferase easF (340 aa).

This sequence belongs to the methyltransferase superfamily. Homodimer.

The enzyme catalyses 4-(3-methylbut-2-enyl)-L-tryptophan + S-adenosyl-L-methionine = 4-(3-methylbut-2-enyl)-L-abrine + S-adenosyl-L-homocysteine + H(+). It participates in alkaloid biosynthesis; ergot alkaloid biosynthesis. In terms of biological role, 4-dimethylallyltryptophan N-methyltransferase; part of the gene cluster that mediates the biosynthesis of fungal ergot alkaloid. DmaW catalyzes the first step of ergot alkaloid biosynthesis by condensing dimethylallyl diphosphate (DMAP) and tryptophan to form 4-dimethylallyl-L-tryptophan. The second step is catalyzed by the methyltransferase easF that methylates 4-dimethylallyl-L-tryptophan in the presence of S-adenosyl-L-methionine, resulting in the formation of 4-dimethylallyl-L-abrine. The catalase easC and the FAD-dependent oxidoreductase easE then transform 4-dimethylallyl-L-abrine to chanoclavine-I which is further oxidized by easD in the presence of NAD(+), resulting in the formation of chanoclavine-I aldehyde. Chanoclavine-I aldehyde is the precursor of ergoamides and ergopeptines in Clavicipitaceae, and clavine-type alcaloids such as fumiclavine in Trichocomaceae. However, the metabolites downstream of chanoclavine-I aldehyde in Arthrodermataceae have not been identified yet. The chain is 4-dimethylallyltryptophan N-methyltransferase easF from Arthroderma benhamiae (strain ATCC MYA-4681 / CBS 112371) (Trichophyton mentagrophytes).